We begin with the raw amino-acid sequence, 349 residues long: MSTVSAYAATSATEPLTKTTITRRAVGPHDVAFDIHFAGICHSDIHTVKAEWGVPNYPVVPGHEIAGVVTEVGSEVTKYKVGDRVGVGCFVDSCRECDNCKAGLEQYCTGTGMVGTYNAIDRDGTPTHGGYSGAIVVDENYVLRIPDSLPLDAAAPLLCAGITTYSPLRHWNAGPGKKVAVIGLGGLGHVAVKLAKAMGADVTVLSQSLKKMEDGLRLGASAYYATSDPETFDKLAGSFDLILNTVSANLDLGAYLGLLKLDGALVELGLPEHPMEVPAFPLLAQRRNLTGSMIGGIPETQEMLDFCAEHDVRPEIEIITPDYINEAYERVLASDVRYRFVIDTASLRS.

Residues cysteine 41, histidine 63, cysteine 94, cysteine 97, cysteine 100, cysteine 108, and cysteine 159 each contribute to the Zn(2+) site. An Isoglutamyl lysine isopeptide (Lys-Gln) (interchain with Q-Cter in protein Pup) cross-link involves residue lysine 210.

The protein belongs to the zinc-containing alcohol dehydrogenase family. The cofactor is Zn(2+).

It catalyses the reaction a primary alcohol + NADP(+) = an aldehyde + NADPH + H(+). Its function is as follows. Prefers aldehydes over alcohols. The polypeptide is NADP-dependent alcohol dehydrogenase C 1 (adhc1) (Mycolicibacterium smegmatis (strain ATCC 700084 / mc(2)155) (Mycobacterium smegmatis)).